The chain runs to 432 residues: Adenylosuccinate synthetase (432 aa).

GTP is bound by residues 13-19 (GDEGKGK) and 41-43 (GHT). D14 acts as the Proton acceptor in catalysis. Mg(2+) contacts are provided by D14 and G41. IMP contacts are provided by residues 14–17 (DEGK), 39–42 (NAGH), T131, R145, Q226, T241, and R305. H42 functions as the Proton donor in the catalytic mechanism. 301 to 307 (SVTGRAR) provides a ligand contact to substrate. GTP is bound by residues R307, 333–335 (KLD), and 416–418 (STG).

Belongs to the adenylosuccinate synthetase family. As to quaternary structure, homodimer. Mg(2+) is required as a cofactor.

The protein resides in the cytoplasm. The enzyme catalyses IMP + L-aspartate + GTP = N(6)-(1,2-dicarboxyethyl)-AMP + GDP + phosphate + 2 H(+). It participates in purine metabolism; AMP biosynthesis via de novo pathway; AMP from IMP: step 1/2. Plays an important role in the de novo pathway of purine nucleotide biosynthesis. Catalyzes the first committed step in the biosynthesis of AMP from IMP. In Neisseria gonorrhoeae (strain ATCC 700825 / FA 1090), this protein is Adenylosuccinate synthetase.